A 374-amino-acid polypeptide reads, in one-letter code: Alcohol dehydrogenase class-3 (374 aa).

Ser2 carries the post-translational modification N-acetylserine. Zn(2+) is bound by residues Cys45, His67, Cys97, Cys100, Cys103, Cys111, and Cys174. At Lys233 the chain carries N6-succinyllysine. At Ser247 the chain carries Phosphoserine. The residue at position 315 (Lys315) is an N6-succinyllysine. Ser324 and Ser351 each carry phosphoserine.

It belongs to the zinc-containing alcohol dehydrogenase family. Class-III subfamily. Homodimer. Zn(2+) is required as a cofactor.

It is found in the cytoplasm. The catalysed reaction is a primary alcohol + NAD(+) = an aldehyde + NADH + H(+). It catalyses the reaction a secondary alcohol + NAD(+) = a ketone + NADH + H(+). It carries out the reaction S-(hydroxymethyl)glutathione + NADP(+) = S-formylglutathione + NADPH + H(+). The enzyme catalyses S-(hydroxymethyl)glutathione + NAD(+) = S-formylglutathione + NADH + H(+). The catalysed reaction is 20-oxo-(5Z,8Z,11Z,14Z)-eicosatetraenoate + NAD(+) + H2O = (5Z,8Z,11Z,14Z)-eicosatetraenedioate + NADH + 2 H(+). It catalyses the reaction 20-hydroxy-(5Z,8Z,11Z,14Z)-eicosatetraenoate + NAD(+) = 20-oxo-(5Z,8Z,11Z,14Z)-eicosatetraenoate + NADH + H(+). It carries out the reaction S-nitrosoglutathione + NADH + H(+) = S-(hydroxysulfenamide)glutathione + NAD(+). Its function is as follows. Catalyzes the oxidation of long-chain primary alcohols and the oxidation of S-(hydroxymethyl) glutathione. Also oxidizes long chain omega-hydroxy fatty acids, such as 20-HETE, producing both the intermediate aldehyde, 20-oxoarachidonate and the end product, a dicarboxylic acid, (5Z,8Z,11Z,14Z)-eicosatetraenedioate. Class-III ADH is remarkably ineffective in oxidizing ethanol. Required for clearance of cellular formaldehyde, a cytotoxic and carcinogenic metabolite that induces DNA damage. Also acts as a S-nitroso-glutathione reductase by catalyzing the NADH-dependent reduction of S-nitrosoglutathione, thereby regulating protein S-nitrosylation. The chain is Alcohol dehydrogenase class-3 from Equus caballus (Horse).